Reading from the N-terminus, the 495-residue chain is Chromosomal replication initiator protein DnaA (495 aa).

The segment at methionine 1–arginine 83 is domain I, interacts with DnaA modulators. Positions arginine 83 to serine 158 are domain II. The disordered stretch occupies residues alanine 86 to glutamine 127. Residues glycine 159 to serine 375 form a domain III, AAA+ region region. Residues glycine 203, glycine 205, lysine 206, and threonine 207 each coordinate ATP. The tract at residues histidine 376 to serine 495 is domain IV, binds dsDNA.

It belongs to the DnaA family. In terms of assembly, oligomerizes as a right-handed, spiral filament on DNA at oriC.

It is found in the cytoplasm. Functionally, plays an essential role in the initiation and regulation of chromosomal replication. ATP-DnaA binds to the origin of replication (oriC) to initiate formation of the DNA replication initiation complex once per cell cycle. Binds the DnaA box (a 9 base pair repeat at the origin) and separates the double-stranded (ds)DNA. Forms a right-handed helical filament on oriC DNA; dsDNA binds to the exterior of the filament while single-stranded (ss)DNA is stabiized in the filament's interior. The ATP-DnaA-oriC complex binds and stabilizes one strand of the AT-rich DNA unwinding element (DUE), permitting loading of DNA polymerase. After initiation quickly degrades to an ADP-DnaA complex that is not apt for DNA replication. Binds acidic phospholipids. This Chromohalobacter salexigens (strain ATCC BAA-138 / DSM 3043 / CIP 106854 / NCIMB 13768 / 1H11) protein is Chromosomal replication initiator protein DnaA.